Here is a 265-residue protein sequence, read N- to C-terminus: Leucine-rich repeat-containing protein Bf66946 (265 aa).

The signal sequence occupies residues 1–20 (MALRDIFLLSMAMTAVTVQA). 2 disulfides stabilise this stretch: Cys21-Cys27 and Cys25-Cys39. One can recognise an LRRNT domain in the interval 21–50 (CPSACKCTVSLYGEMVVACGGMGLTEIPED). LRR repeat units follow at residues 51-75 (IPHR…SFKG), 76-99 (LRNL…ALRH), and 100-123 (LGHL…LFDF). Asn64 carries an N-linked (GlcNAc...) asparagine glycan. Positions 142–193 (NPWGCDCRMAWLAQELAGGSKTFGDRHMECATPAALAGRGLSEIPQTSFVCT) constitute an LRRCT domain. 2 cysteine pairs are disulfide-bonded: Cys146-Cys171 and Cys148-Cys192. A helical membrane pass occupies residues 220–240 (VAVVFGCITGLVTILLLVLTA).

It localises to the cell membrane. In terms of biological role, binds selectively to the Gram-positive bacteria S.aureus and S.pneumoniae. Does not adhere to the Gram-negative bacteria E.coli and S.enterica. Probably recognizes peptidoglycans expressed on the bacterial cell surface. This is Leucine-rich repeat-containing protein Bf66946 from Branchiostoma floridae (Florida lancelet).